The following is a 976-amino-acid chain: Ephrin type-A receptor 2 (976 aa).

A signal peptide spans 1–23; that stretch reads MELQAARACFALLWGCALAAAAA. The segment at 1 to 206 is mediates interaction with CLDN4; it reads MELQAARACF…YYKKCPELLQ (206 aa). Residues 24–537 are Extracellular-facing; it reads AQGKEVVLLD…SPEGSGNLAV (514 aa). The Eph LBD domain occupies 28–206; that stretch reads EVVLLDFAAA…YYKKCPELLQ (179 aa). 2 cysteine pairs are disulfide-bonded: cysteine 70/cysteine 188 and cysteine 105/cysteine 115. The Fibronectin type-III 1 domain maps to 328-432; sequence PPSAPHYLTA…TSRSFRTASV (105 aa). Residues asparagine 407 and asparagine 435 are each glycosylated (N-linked (GlcNAc...) asparagine). One can recognise a Fibronectin type-III 2 domain in the interval 438–529; it reads EPPKVRLEGR…KVHEFQTLSP (92 aa). The helical transmembrane segment at 538-558 threads the bilayer; the sequence is IGGVAVGVVLLLVLAGVGFFI. The Cytoplasmic segment spans residues 559-976; that stretch reads HRRRKNQRAR…DQVNTVGIPI (418 aa). The residue at position 570 (serine 570) is a Phosphoserine. Phosphotyrosine is present on tyrosine 575. Serine 579 bears the Phosphoserine mark. Tyrosine 588 carries the post-translational modification Phosphotyrosine; by autocatalysis. The residue at position 594 (tyrosine 594) is a Phosphotyrosine. The segment at 606-906 is mediates interaction with ARHGEF16 and ELMO2; it reads TEIHPSCVTR…STSGSEGVPF (301 aa). The Protein kinase domain occupies 613-875; that stretch reads VTRQKVIGAG…DIVSILDKLI (263 aa). 619–627 is a binding site for ATP; it reads IGAGEFGEV. At tyrosine 628 the chain carries Phosphotyrosine. Lysine 646 serves as a coordination point for ATP. At threonine 647 the chain carries Phosphothreonine. Tyrosine 735 carries the phosphotyrosine; by autocatalysis modification. The active-site Proton acceptor is aspartate 739. Tyrosine 772 carries the post-translational modification Phosphotyrosine. Residues serine 869 and serine 892 each carry the phosphoserine modification. Residues 886-976 form a negatively regulates interaction with ARHGEF16 region; the sequence is DFDPRVSIRL…DQVNTVGIPI (91 aa). A Phosphoserine; by PKB/AKT1, RPS6KA1, RPS6KA3 AND PKA modification is found at serine 897. Serine 901 carries the phosphoserine modification. The region spanning 904–968 is the SAM domain; sequence VPFRTVSEWL…AYSLLGLKDQ (65 aa). The residue at position 921 (tyrosine 921) is a Phosphotyrosine; by autocatalysis. Tyrosine 930 is subject to Phosphotyrosine. Residues 974-976 carry the PDZ-binding motif; that stretch reads IPI.

It belongs to the protein kinase superfamily. Tyr protein kinase family. Ephrin receptor subfamily. In terms of assembly, homodimer. Interacts with SLA. Interacts (phosphorylated form) with VAV2, VAV3 and PI3-kinase p85 subunit (PIK3R1, PIK3R2 or PIK3R3); critical for the EFNA1-induced activation of RAC1 which stimulates cell migration. Interacts with INPPL1; regulates activated EPHA2 endocytosis and degradation. Interacts (inactivated form) with PTK2/FAK1 and interacts (EFNA1 ligand-activated form) with PTPN11; regulates integrin-mediated adhesion. Interacts with ARHGEF16, DOCK4 and ELMO2; mediates ligand-independent activation of RAC1 which stimulates cell migration. Interacts with CLDN4; phosphorylates CLDN4 and may regulate tight junctions. Interacts with ACP1. Interacts (via SAM domain) with ANKS1A (via SAM domain). Interacts with CEMIP. Interacts with NCK1; may regulate EPHA2 activity in cell migration and adhesion. Interacts with TIMD4. (Microbial infection) Interacts with human herpes virus 8/HHV-8 glycoprotein L/gL and glycoprotein H/gH heterodimer; this interaction triggers EPHA2 phosphorylation and endocytosis, allowing virus entry. As to quaternary structure, (Microbial infection) Interacts with human cytomegalovirus (HCMV) glycoprotein L/gL and glycoprotein H/gH heterodimer. In terms of assembly, (Microbial infection) Interacts with Epstein-Barr virus/HHV-4 glycoprotein L/gL and glycoprotein H/gH heterodimer; this interaction facilitates virus internalization and fusion. Post-translationally, autophosphorylates. Phosphorylated on tyrosine upon binding and activation by EFNA1. Phosphorylated residues Tyr-588 and Tyr-594 are required for binding VAV2 and VAV3 while phosphorylated residues Tyr-735 and Tyr-930 are required for binding PI3-kinase p85 subunit (PIK3R1, PIK3R2 or PIK3R3). These phosphorylated residues are critical for recruitment of VAV2 and VAV3 and PI3-kinase p85 subunit which transduce downstream signaling to activate RAC1 GTPase and cell migration. Dephosphorylation of Tyr-930 by PTPRF prevents the interaction of EPHA2 with NCK1. Phosphorylated at Ser-897 by PKB; serum-induced phosphorylation which targets EPHA2 to the cell leading edge and stimulates cell migration. Phosphorylation by PKB is inhibited by EFNA1-activated EPHA2 which regulates PKB activity via a reciprocal regulatory loop. Phosphorylated at Ser-897 in response to TNF by RPS6KA1 and RPS6KA3; RPS6KA-EPHA2 signaling pathway controls cell migration. Phosphorylated at Ser-897 by PKA; blocks cell retraction induced by EPHA2 kinase activity. Dephosphorylated by ACP1. Ubiquitinated by CHIP/STUB1. Ubiquitination is regulated by the HSP90 chaperone and regulates the receptor stability and activity through proteasomal degradation. ANKS1A prevents ubiquitination and degradation. In terms of tissue distribution, expressed in brain and glioma tissue and glioma cell lines (at protein level). Expressed most highly in tissues that contain a high proportion of epithelial cells, e.g. skin, intestine, lung, and ovary.

It localises to the cell membrane. Its subcellular location is the cell projection. The protein resides in the ruffle membrane. It is found in the lamellipodium membrane. The protein localises to the cell junction. It localises to the focal adhesion. It catalyses the reaction L-tyrosyl-[protein] + ATP = O-phospho-L-tyrosyl-[protein] + ADP + H(+). In terms of biological role, receptor tyrosine kinase which binds promiscuously membrane-bound ephrin-A family ligands residing on adjacent cells, leading to contact-dependent bidirectional signaling into neighboring cells. The signaling pathway downstream of the receptor is referred to as forward signaling while the signaling pathway downstream of the ephrin ligand is referred to as reverse signaling. Activated by the ligand ephrin-A1/EFNA1 regulates migration, integrin-mediated adhesion, proliferation and differentiation of cells. Regulates cell adhesion and differentiation through DSG1/desmoglein-1 and inhibition of the ERK1/ERK2 (MAPK3/MAPK1, respectively) signaling pathway. May also participate in UV radiation-induced apoptosis and have a ligand-independent stimulatory effect on chemotactic cell migration. During development, may function in distinctive aspects of pattern formation and subsequently in development of several fetal tissues. Involved for instance in angiogenesis, in early hindbrain development and epithelial proliferation and branching morphogenesis during mammary gland development. Engaged by the ligand ephrin-A5/EFNA5 may regulate lens fiber cells shape and interactions and be important for lens transparency development and maintenance. With ephrin-A2/EFNA2 may play a role in bone remodeling through regulation of osteoclastogenesis and osteoblastogenesis. Functionally, (Microbial infection) Acts as a receptor for hepatitis C virus (HCV) in hepatocytes and facilitates its cell entry. Mediates HCV entry by promoting the formation of the CD81-CLDN1 receptor complexes that are essential for HCV entry and by enhancing membrane fusion of cells expressing HCV envelope glycoproteins. Acts as a receptor for human cytomegalovirus (HCMV) to mediate viral entry and fusion in glioblastoma cells. This chain is Ephrin type-A receptor 2 (EPHA2), found in Homo sapiens (Human).